The chain runs to 151 residues: Myosin light polypeptide 6 (151 aa).

Cys-2 is modified (N-acetylcysteine). 3 consecutive EF-hand domains span residues 7–42 (EQTAEFKEAFQLFDRTGDGKILYSQCGDVMRALGQN), 84–119 (GCFEDYVEGLRVFDKEGNGTVMGAEIRHVLVTLGEK), and 119–151 (KMTEEEVEQLVAGHEDSNGCINYEELVRMVLSG).

Myosin is a hexamer of 2 heavy chains and 4 light chains.

Regulatory light chain of myosin. Does not bind calcium. This is Myosin light polypeptide 6 (MYL6) from Gallus gallus (Chicken).